The sequence spans 318 residues: Malate dehydrogenase (318 aa).

Residues 10 to 15 (GAGNIG) and aspartate 34 each bind NAD(+). Substrate is bound by residues arginine 83 and arginine 89. Residues asparagine 96 and 119-121 (ITN) contribute to the NAD(+) site. Residues asparagine 121 and arginine 152 each contribute to the substrate site. Histidine 176 acts as the Proton acceptor in catalysis.

It belongs to the LDH/MDH superfamily. MDH type 3 family.

The enzyme catalyses (S)-malate + NAD(+) = oxaloacetate + NADH + H(+). Functionally, catalyzes the reversible oxidation of malate to oxaloacetate. This is Malate dehydrogenase from Rhodospirillum rubrum (strain ATCC 11170 / ATH 1.1.1 / DSM 467 / LMG 4362 / NCIMB 8255 / S1).